A 213-amino-acid chain; its full sequence is MDTIWDISPPIAPATPVWPGDTPVGIERVWRIEAGSPVNVARVTLSPHTGAHADAPLHYDADGAPIGAVPLDAYLGRCRVIHCIGARSAVTPEHVRAALAGAPPRVLLRTYGQAPQHAWDSAFCAVAPETIDLLAAHGVRLVGIDTPSLDPQESKTMDAHRRIRAHRMAILEGLVLDEIAAGDYELIALPLKFATLDASPVRAVLRALPDAPR.

Position 18 (Trp18) interacts with substrate. Zn(2+) is bound by residues His48, His52, and Asp54. The Proton donor/acceptor role is filled by His58. Zn(2+) contacts are provided by His160 and Glu172.

This sequence belongs to the Cyclase 1 superfamily. KynB family. Homodimer. It depends on Zn(2+) as a cofactor.

It carries out the reaction N-formyl-L-kynurenine + H2O = L-kynurenine + formate + H(+). It functions in the pathway amino-acid degradation; L-tryptophan degradation via kynurenine pathway; L-kynurenine from L-tryptophan: step 2/2. In terms of biological role, catalyzes the hydrolysis of N-formyl-L-kynurenine to L-kynurenine, the second step in the kynurenine pathway of tryptophan degradation. This chain is Kynurenine formamidase, found in Burkholderia pseudomallei (strain 1106a).